The chain runs to 131 residues: Small ribosomal subunit protein uS11 (131 aa).

It belongs to the universal ribosomal protein uS11 family. In terms of assembly, part of the 30S ribosomal subunit. Interacts with proteins S7 and S18. Binds to IF-3.

Functionally, located on the platform of the 30S subunit, it bridges several disparate RNA helices of the 16S rRNA. Forms part of the Shine-Dalgarno cleft in the 70S ribosome. The protein is Small ribosomal subunit protein uS11 of Syntrophotalea carbinolica (strain DSM 2380 / NBRC 103641 / GraBd1) (Pelobacter carbinolicus).